The sequence spans 258 residues: Phosphate import ATP-binding protein PstB (258 aa).

The 242-residue stretch at 12–253 (IQVHNLNFYY…PKMKQTEDYI (242 aa)) folds into the ABC transporter domain. An ATP-binding site is contributed by 44–51 (GPSGCGKS).

The protein belongs to the ABC transporter superfamily. Phosphate importer (TC 3.A.1.7) family. As to quaternary structure, the complex is composed of two ATP-binding proteins (PstB), two transmembrane proteins (PstC and PstA) and a solute-binding protein (PstS).

The protein resides in the cell inner membrane. The catalysed reaction is phosphate(out) + ATP + H2O = ADP + 2 phosphate(in) + H(+). In terms of biological role, part of the ABC transporter complex PstSACB involved in phosphate import. Responsible for energy coupling to the transport system. The polypeptide is Phosphate import ATP-binding protein PstB (Photorhabdus laumondii subsp. laumondii (strain DSM 15139 / CIP 105565 / TT01) (Photorhabdus luminescens subsp. laumondii)).